Reading from the N-terminus, the 84-residue chain is Acetylcholine receptor subunit alpha (84 aa).

The cysteines at positions 7 and 21 are disulfide-linked. N-linked (GlcNAc...) asparagine glycans are attached at residues asparagine 20 and asparagine 66. Cysteine 71 and cysteine 72 are joined by a disulfide.

The protein belongs to the ligand-gated ion channel (TC 1.A.9) family. Acetylcholine receptor (TC 1.A.9.1) subfamily. Alpha-1/CHRNA1 sub-subfamily. As to quaternary structure, one of the alpha chains that assemble within the acetylcholine receptor, a pentamer of two alpha chains, a beta, a delta, and a gamma (in immature muscle) or epsilon (in mature muscle) chains. The muscle heteropentamer composed of alpha-1, beta-1, delta, epsilon subunits interacts with the alpha-conotoxin ImII.

The protein resides in the postsynaptic cell membrane. Its subcellular location is the cell membrane. It carries out the reaction K(+)(in) = K(+)(out). It catalyses the reaction Na(+)(in) = Na(+)(out). Upon acetylcholine binding, the AChR responds by an extensive change in conformation that affects all subunits and leads to opening of an ion-conducting channel across the plasma membrane. The chain is Acetylcholine receptor subunit alpha (CHRNA1) from Herpestes ichneumon (Egyptian mongoose).